Reading from the N-terminus, the 84-residue chain is MKAIIFFIGCLMLIDLVAGSRSGYPVTQKGCVYSCFWGSNWWCNAECTALGGSSGYCAWPSCWCYSLPDNRNIWGSYPNNCGKK.

The N-terminal stretch at 1–19 (MKAIIFFIGCLMLIDLVAG) is a signal peptide. The 62-residue stretch at 21–82 (RSGYPVTQKG…IWGSYPNNCG (62 aa)) folds into the LCN-type CS-alpha/beta domain. 4 disulfides stabilise this stretch: Cys31–Cys81, Cys35–Cys57, Cys43–Cys62, and Cys47–Cys64. At Cys81 the chain carries Cysteine amide.

In terms of tissue distribution, expressed by the venom gland.

Its subcellular location is the secreted. Beta toxins bind voltage-independently at site-4 of sodium channels (Nav) and shift the voltage of activation toward more negative potentials thereby affecting sodium channel activation and promoting spontaneous and repetitive firing. The polypeptide is Toxin To5 (Tityus obscurus (Amazonian scorpion)).